Consider the following 401-residue polypeptide: Divinyl chlorophyllide a 8-vinyl-reductase, chloroplastic (401 aa).

A compositionally biased stretch (polar residues) spans 1–10 (MATILLSSRL). A disordered region spans residues 1-26 (MATILLSSRLPTTGTATPSPTRPAPR). The N-terminal 54 residues, 1-54 (MATILLSSRLPTTGTATPSPTRPAPRFLSFPGTAIRRRGRGPLLASSAVSPPAP), are a transit peptide targeting the chloroplast.

The protein resides in the plastid. It localises to the chloroplast. The enzyme catalyses protochlorophyllide a + NADP(+) = 3,8-divinyl protochlorophyllide a + NADPH + H(+). The protein operates within porphyrin-containing compound metabolism; chlorophyll biosynthesis. In terms of biological role, catalyzes the conversion of divinyl chlorophyllide to monovinyl chlorophyllide. Reduces the 8-vinyl group of the tetrapyrrole to an ethyl group using NADPH as the reductant. Can use (3,8-divinyl)-chlorophyllide a (DV-Chlidea) &gt; (3,8-divinyl)-chlorophyll a (DV-Chla) &gt; (3,8-divinyl)-protochlorophyllide a (DV-Pchlidea) &gt; (3,8-divinyl)-magnesium-protoporphyrin IX monomethyl ester (DV-MPE) &gt; (3,8-divinyl)-magnesium-protoporphyrin IX (DV-Mg-Proto) as substrates. The chain is Divinyl chlorophyllide a 8-vinyl-reductase, chloroplastic (DVR) from Zea mays (Maize).